A 163-amino-acid chain; its full sequence is Phosphopantetheine adenylyltransferase (163 aa).

Thr-10 contacts substrate. ATP-binding positions include Thr-10–Phe-11 and His-18. Residues Lys-42, Leu-74, and Arg-88 each contribute to the substrate site. ATP is bound by residues Gly-89–Arg-91, Glu-99, and Asn-124–Thr-130.

Belongs to the bacterial CoaD family. As to quaternary structure, homohexamer. Mg(2+) serves as cofactor.

The protein localises to the cytoplasm. The enzyme catalyses (R)-4'-phosphopantetheine + ATP + H(+) = 3'-dephospho-CoA + diphosphate. Its pathway is cofactor biosynthesis; coenzyme A biosynthesis; CoA from (R)-pantothenate: step 4/5. Its function is as follows. Reversibly transfers an adenylyl group from ATP to 4'-phosphopantetheine, yielding dephospho-CoA (dPCoA) and pyrophosphate. The polypeptide is Phosphopantetheine adenylyltransferase (Shewanella baltica (strain OS223)).